A 553-amino-acid chain; its full sequence is Zinc finger protein Elbow (553 aa).

Disordered stretches follow at residues 59–243 (STKQ…MHSP) and 388–407 (GGGGGGSSKSSGSQGGSGGS). 2 stretches are compositionally biased toward low complexity: residues 96–110 (SPVSSHSSSVSTGSV) and 121–134 (SSSSSKPTPTTFKP). Polar residues-rich tracts occupy residues 137–146 (PNNNISNITT), 153–173 (TNLSSNNTSAQQRVKTPKSMT), and 224–236 (TASTTPGRSNSKE). The self-association stretch occupies residues 287–480 (SASAAAAAAS…PDAVLSAAAA (194 aa)). An interaction with noc region spans residues 287-553 (SASAAAAAAS…YGPRMGSSHP (267 aa)). The span at 388–406 (GGGGGGSSKSSGSQGGSGG) shows a compositional bias: gly residues. The C2H2-type zinc finger occupies 437-466 (YVCSWIGSDAAYCGKRFGTSDDLFQHLRTH).

This sequence belongs to the Elbow/Noc family. Self-associates. Interacts with gro and noc.

Functionally, may negatively regulate Notch-induced cell proliferation in the eye-head primordium. May act in leg and wing primordia to negatively regulate body-wall specifying genes and thereby promote appendage formation. Required for tracheal development. This is Zinc finger protein Elbow (elB) from Drosophila melanogaster (Fruit fly).